We begin with the raw amino-acid sequence, 358 residues long: 3-isopropylmalate dehydrogenase (358 aa).

Residues Arg-92, Arg-102, Arg-130, and Asp-224 each contribute to the substrate site. Asp-224, Asp-248, and Asp-252 together coordinate Mg(2+). 282-294 (GSAPDIAGQGIAN) is an NAD(+) binding site.

Belongs to the isocitrate and isopropylmalate dehydrogenases family. LeuB type 1 subfamily. As to quaternary structure, homodimer. Mg(2+) is required as a cofactor. It depends on Mn(2+) as a cofactor.

It is found in the cytoplasm. It catalyses the reaction (2R,3S)-3-isopropylmalate + NAD(+) = 4-methyl-2-oxopentanoate + CO2 + NADH. It functions in the pathway amino-acid biosynthesis; L-leucine biosynthesis; L-leucine from 3-methyl-2-oxobutanoate: step 3/4. Catalyzes the oxidation of 3-carboxy-2-hydroxy-4-methylpentanoate (3-isopropylmalate) to 3-carboxy-4-methyl-2-oxopentanoate. The product decarboxylates to 4-methyl-2 oxopentanoate. The sequence is that of 3-isopropylmalate dehydrogenase from Bordetella pertussis (strain Tohama I / ATCC BAA-589 / NCTC 13251).